The chain runs to 2135 residues: Nonribosomal peptide synthetase gliP (2135 aa).

The tract at residues 34-424 is adenylation 1; that stretch reads TYTELDVASS…LPADVEEPLR (391 aa). The Carrier 1 domain maps to 519-594; the sequence is TEREQVIAEC…GILPYARDLA (76 aa). Ser555 is subject to O-(pantetheine 4'-phosphoryl)serine. Positions 663–913 are condensation 1; it reads AEHICNAWRQ…MATLPLVCRI (251 aa). The segment at 1078–1458 is adenylation 2; sequence YRELDQKSNA…YQEEPRLTQA (381 aa). Residues 1544–1622 form the Carrier 2 domain; that stretch reads ASIADGIATL…EQVELVRRKR (79 aa). O-(pantetheine 4'-phosphoryl)serine is present on Ser1582. The segment at 1642 to 1905 is condensation 2; the sequence is SPLERQTWFQ…FLDRLPLRFK (264 aa). The Carrier 3 domain occupies 2061–2134; sequence RRLVGILQRE…DLAQRLYRQV (74 aa). Ser2095 is modified (O-(pantetheine 4'-phosphoryl)serine).

Belongs to the NRP synthetase family.

Its pathway is mycotoxin biosynthesis. In terms of biological role, nonribosomal peptide synthetase; part of the gene cluster that mediates the biosynthesis of gliotoxin, a member of the epipolythiodioxopiperazine (ETP) class of toxins characterized by a disulfide-bridged cyclic dipeptide. The first step in gliotoxin biosynthesis is the condensation of serine and phenylalanine to form the cyclo-L-phenylalanyl-L-serine diketopiperazine (DKP) by the NRPS gliP. GliP is also able to produce the DKP cyclo-L-tryptophanyl-L-serine, suggesting that the substrate specificity of the first adenylation (A) domain in gliP is sufficiently relaxed to accommodate both L-Phe and L-Trp. The cytochrome P450 monooxygenase gliC has been shown to catalyze the subsequent hydroxylation of the alpha-carbon of L-Phe in cyclo-L-phenylalanyl-L-serine whereas the second cytochrome P450 enzyme, gliF, is presumably involved in the modification of the DKP side chain. The glutathione S-transferase (GST) gliG then forms a bis-glutathionylated biosynthetic intermediate which is responsible for the sulfurization of gliotoxin. This bis-glutathionylated intermediate is subsequently processed by the gamma-glutamyl cyclotransferase gliK to remove both gamma-glutamyl moieties. Subsequent processing via gliI yields a biosynthetic intermediate, which is N-methylated via the N-methyltransferase gliN, before the gliotoxin oxidoreductase gliT-mediated disulfide bridge closure. GliN-mediated amide methylation confers stability to ETP, damping the spontaneous formation of tri- and tetrasulfides. Intracellular dithiol gliotoxin oxidized by gliT is subsequently effluxed by gliA. Gliotoxin contributes to pathogenesis during invasive aspergillosis. In macrophages and neutrophils, gliotoxin showed inhibition of various different cell functions including cytokine production, antigen presentation, phagocytosis, and production of reactive oxygen species. The protein is Nonribosomal peptide synthetase gliP of Aspergillus fumigatus (strain ATCC MYA-4609 / CBS 101355 / FGSC A1100 / Af293) (Neosartorya fumigata).